We begin with the raw amino-acid sequence, 250 residues long: Acyl-coenzyme A diphosphatase fit1 (250 aa).

The Cytoplasmic portion of the chain corresponds to Met-1–Asp-23. The chain crosses the membrane as a helical span at residues Ile-24–Val-44. Over Asp-45–Asn-58 the chain is Lumenal. Residues Leu-59–His-79 traverse the membrane as a helical segment. At Ala-80 to Arg-95 the chain is on the cytoplasmic side. The helical transmembrane segment at Tyr-96–Ile-116 threads the bilayer. The Lumenal segment spans residues Asp-117–Gly-160. An N-linked (GlcNAc...) asparagine glycan is attached at Asn-149. His-161 is an active-site residue. The chain crosses the membrane as a helical span at residues His-161–Leu-181. Over Asn-182–Lys-191 the chain is Cytoplasmic. A helical transmembrane segment spans residues Val-192–His-212. The active site involves His-212. A topological domain (lumenal) is located at residue Thr-213. The helical transmembrane segment at Thr-214–Phe-234 threads the bilayer. Residues Ser-235–Tyr-250 are Cytoplasmic-facing.

Belongs to the FIT family. Fungal FIT2B/SCS3 subfamily.

It is found in the endoplasmic reticulum membrane. It carries out the reaction an acyl-CoA + H2O = an acyl-4'-phosphopantetheine + adenosine 3',5'-bisphosphate + 2 H(+). The enzyme catalyses (9Z)-octadecenoyl-CoA + H2O = S-(9Z-octadecenoyl)-4'-phosphopantetheine + adenosine 3',5'-bisphosphate + 2 H(+). The catalysed reaction is (5Z,8Z,11Z,14Z)-eicosatetraenoyl-CoA + H2O = S-(5Z,8Z,11Z,14Z-eicosatetraenoyl)-4'-phosphopantetheine + adenosine 3',5'-bisphosphate + 2 H(+). It catalyses the reaction hexadecanoyl-CoA + H2O = S-hexadecanoyl-4'-phosphopantetheine + adenosine 3',5'-bisphosphate + 2 H(+). Fatty acyl-coenzyme A (CoA) diphosphatase that hydrolyzes fatty acyl-CoA to yield acyl-4'-phosphopantetheine and adenosine 3',5'-bisphosphate. Preferentially hydrolyzes unsaturated long-chain acyl-CoA substrates in the endoplasmic reticulum (ER) lumen. This catalytic activity is required for maintaining ER structure and for lipid droplets (LDs) biogenesis, which are lipid storage organelles involved in maintaining lipid and energy homeostasis. May directly bind to diacylglycerol (DAGs) and triacylglycerol, which is also important for LD biogenesis. May support directional budding of nacent LDs from the ER into the cytosol by reducing DAG levels at sites of LD formation. May play a role in the regulation of cell morphology and cytoskeletal organization. This is Acyl-coenzyme A diphosphatase fit1 from Schizosaccharomyces pombe (strain 972 / ATCC 24843) (Fission yeast).